The following is a 256-amino-acid chain: 5'-nucleotidase SurE (256 aa).

A divalent metal cation contacts are provided by D8, D9, S40, and N92.

It belongs to the SurE nucleotidase family. Requires a divalent metal cation as cofactor.

The protein localises to the cytoplasm. The enzyme catalyses a ribonucleoside 5'-phosphate + H2O = a ribonucleoside + phosphate. Its function is as follows. Nucleotidase that shows phosphatase activity on nucleoside 5'-monophosphates. In Rhizobium meliloti (strain 1021) (Ensifer meliloti), this protein is 5'-nucleotidase SurE.